Here is a 116-residue protein sequence, read N- to C-terminus: Cation channel sperm-associated auxiliary subunit TMEM262 (116 aa).

At 1–16 (MRWRDRIAVLCFPPGL) the chain is on the cytoplasmic side. A helical membrane pass occupies residues 17-38 (MLTVAALILFFIHMGVFASDVH). Residues 39 to 51 (NFCVIHNYDHMSF) are Extracellular-facing. Residues 52-72 (RYTVVLIFSQVISIGWAAMGS) form a helical membrane-spanning segment. Topologically, residues 73-84 (LYAEMTGDKFLR) are cytoplasmic. The chain crosses the membrane as a helical span at residues 85-107 (CFALTILILNGAMFFNRLCLEFL). The Extracellular portion of the chain corresponds to 108–116 (AINYREERH).

In terms of assembly, component of the CatSper complex or CatSpermasome composed of the core pore-forming members CATSPER1, CATSPER2, CATSPER3 and CATSPER4 as well as auxiliary members CATSPERB, CATSPERG, CATSPERD, CATSPERE, CATSPERZ, C2CD6/CATSPERT, SLCO6C1, TMEM249, TMEM262 and EFCAB9. HSPA1 may be an additional auxiliary complex member. The core complex members CATSPER1, CATSPER2, CATSPER3 and CATSPER4 form a heterotetrameric channel. The auxiliary CATSPERB, CATSPERG2, CATSPERD and CATSPERE subunits form a pavilion-like structure over the pore which stabilizes the complex through interactions with CATSPER4, CATSPER3, CATSPER1 and CATSPER2 respectively. SLCO6C1 interacts with CATSPERE and TMEM262/CATSPERH interacts with CATSPERB, further stabilizing the complex. C2CD6/CATSPERT interacts at least with CATSPERD and is required for targeting the CatSper complex in the flagellar membrane.

The protein localises to the cell projection. It localises to the cilium. Its subcellular location is the flagellum membrane. Its function is as follows. Auxiliary component of the CatSper complex, a complex involved in sperm cell hyperactivation. The chain is Cation channel sperm-associated auxiliary subunit TMEM262 from Mus musculus (Mouse).